Here is a 144-residue protein sequence, read N- to C-terminus: Gas vesicle protein A1 (144 aa).

The tract at residues 72 to 144 (EAGPRKDPGL…APSRRKEEQE (73 aa)) is disordered. Basic and acidic residues predominate over residues 113-127 (KQARDDGGSERETSS).

Belongs to the gas vesicle GvpA family. In terms of assembly, the gas vesicle shell is 2 nm thick and consists of a single layer of this protein. It forms helical ribs nearly perpendicular to the long axis of the vesicle.

Its subcellular location is the gas vesicle shell. Its function is as follows. Gas vesicles are hollow, gas filled proteinaceous nanostructures found in some microorganisms. During planktonic growth they allow positioning of the organism at a favorable depth for light or nutrient acquisition. GvpA forms the protein shell. It is not clear what function GVs perform in soil bacteria. This Streptomyces coelicolor (strain ATCC BAA-471 / A3(2) / M145) protein is Gas vesicle protein A1.